The following is a 279-amino-acid chain: Tryptophan synthase alpha chain (279 aa).

Active-site proton acceptor residues include Glu-50 and Asp-61.

This sequence belongs to the TrpA family. As to quaternary structure, tetramer of two alpha and two beta chains.

The catalysed reaction is (1S,2R)-1-C-(indol-3-yl)glycerol 3-phosphate + L-serine = D-glyceraldehyde 3-phosphate + L-tryptophan + H2O. Its pathway is amino-acid biosynthesis; L-tryptophan biosynthesis; L-tryptophan from chorismate: step 5/5. Its function is as follows. The alpha subunit is responsible for the aldol cleavage of indoleglycerol phosphate to indole and glyceraldehyde 3-phosphate. In Brucella abortus (strain S19), this protein is Tryptophan synthase alpha chain.